A 72-amino-acid polypeptide reads, in one-letter code: Translation initiation factor IF-1 (72 aa).

The S1-like domain maps to 1-72 (MAKDDVIEID…DKGRITYRYK (72 aa)).

It belongs to the IF-1 family. Component of the 30S ribosomal translation pre-initiation complex which assembles on the 30S ribosome in the order IF-2 and IF-3, IF-1 and N-formylmethionyl-tRNA(fMet); mRNA recruitment can occur at any time during PIC assembly.

Its subcellular location is the cytoplasm. Its function is as follows. One of the essential components for the initiation of protein synthesis. Stabilizes the binding of IF-2 and IF-3 on the 30S subunit to which N-formylmethionyl-tRNA(fMet) subsequently binds. Helps modulate mRNA selection, yielding the 30S pre-initiation complex (PIC). Upon addition of the 50S ribosomal subunit IF-1, IF-2 and IF-3 are released leaving the mature 70S translation initiation complex. In Campylobacter fetus subsp. fetus (strain 82-40), this protein is Translation initiation factor IF-1.